The following is a 92-amino-acid chain: Small ribosomal subunit protein uS19 (92 aa).

It belongs to the universal ribosomal protein uS19 family.

Its function is as follows. Protein S19 forms a complex with S13 that binds strongly to the 16S ribosomal RNA. In Rhodospirillum rubrum (strain ATCC 11170 / ATH 1.1.1 / DSM 467 / LMG 4362 / NCIMB 8255 / S1), this protein is Small ribosomal subunit protein uS19.